Reading from the N-terminus, the 264-residue chain is DNA repair protein RecO (264 aa).

Belongs to the RecO family.

Its function is as follows. Involved in DNA repair and RecF pathway recombination. The polypeptide is DNA repair protein RecO (Chlorobium luteolum (strain DSM 273 / BCRC 81028 / 2530) (Pelodictyon luteolum)).